A 115-amino-acid polypeptide reads, in one-letter code: Integration host factor subunit alpha (115 aa).

Belongs to the bacterial histone-like protein family. As to quaternary structure, heterodimer of an alpha and a beta chain.

This protein is one of the two subunits of integration host factor, a specific DNA-binding protein that functions in genetic recombination as well as in transcriptional and translational control. This chain is Integration host factor subunit alpha, found in Burkholderia pseudomallei (strain K96243).